The following is a 596-amino-acid chain: Inactive metallocarboxypeptidase ECM14 (596 aa).

Positions 1–22 are cleaved as a signal peptide; it reads MHFSVRLSLFLTLASSLPLVSA. Residues 23–184 constitute a propeptide that is removed on maturation; it reads VPQHEDQAYT…QTIYESYPKA (162 aa). A disordered region spans residues 182–211; sequence PKAGSASPSQQGPTTRRFSPSASTSKSKPH. Residues 187-207 are compositionally biased toward polar residues; the sequence is ASPSQQGPTTRRFSPSASTSK. In terms of domain architecture, Peptidase M14 spans 220–546; that stretch reads DYQPLSVLLP…RAMVAMGKFL (327 aa). H285 and E288 together coordinate Zn(2+). Residues 285–288, R343, and 360–361 each bind substrate; these read HARE and DH. Residues C354 and C377 are joined by a disulfide bond. N370 is a glycosylation site (N-linked (GlcNAc...) asparagine). H417 is a binding site for Zn(2+). 418–419 is a binding site for substrate; that stretch reads SY. Residues 557–596 form a disordered region; sequence DGLRASEEPQDYDNDLEDGEDDKDEQGSTVFRAQADDLQS. Residues 564-580 are compositionally biased toward acidic residues; sequence EPQDYDNDLEDGEDDKD. Residues 583 to 596 show a composition bias toward polar residues; sequence GSTVFRAQADDLQS.

It belongs to the peptidase M14 family. It depends on Zn(2+) as a cofactor.

The protein resides in the vacuole. Its subcellular location is the secreted. Functionally, inactive carboxypeptidase that may play a role in cell wall organization and biogenesis. In Arthroderma benhamiae (strain ATCC MYA-4681 / CBS 112371) (Trichophyton mentagrophytes), this protein is Inactive metallocarboxypeptidase ECM14 (ECM14).